A 516-amino-acid chain; its full sequence is Keratin, type II cuticular Hb2 (516 aa).

The interval 1–118 is head; the sequence is MSCRNFQLSP…PTVQRVKRDE (118 aa). The IF rod domain occupies 118 to 429; sequence EKEQIKCLNN…RLLEGEEHRL (312 aa). The interval 119 to 153 is coil 1A; that stretch reads KEQIKCLNNRFASFINKVRFLEQKNKLLETKWNFM. The tract at residues 154–163 is linker 1; that stretch reads QQQRSCQSNM. The tract at residues 164–264 is coil 1B; the sequence is EPLFEGYICA…FEEEIGLLQS (101 aa). Positions 265-281 are linker 12; that stretch reads QISETSVIVKMDNSREL. The tract at residues 282 to 425 is coil 2; the sequence is DVDGIVAEIK…ATYRRLLEGE (144 aa). A tail region spans residues 426 to 516; it reads EHRLCEGIGP…VGVGSNSCSR (91 aa).

The protein belongs to the intermediate filament family. In terms of assembly, heterotetramer of two type I and two type II keratins.

The chain is Keratin, type II cuticular Hb2 (Krt82) from Mus musculus (Mouse).